The chain runs to 177 residues: Large ribosomal subunit protein uL6 (177 aa).

The protein belongs to the universal ribosomal protein uL6 family. As to quaternary structure, part of the 50S ribosomal subunit.

Functionally, this protein binds to the 23S rRNA, and is important in its secondary structure. It is located near the subunit interface in the base of the L7/L12 stalk, and near the tRNA binding site of the peptidyltransferase center. This Acinetobacter baumannii (strain AB307-0294) protein is Large ribosomal subunit protein uL6.